The sequence spans 943 residues: Aconitate hydratase A (943 aa).

Residues cysteine 479, cysteine 545, and cysteine 548 each contribute to the [4Fe-4S] cluster site.

The protein belongs to the aconitase/IPM isomerase family. As to quaternary structure, monomer. [4Fe-4S] cluster serves as cofactor.

It carries out the reaction citrate = D-threo-isocitrate. The catalysed reaction is (2S,3R)-3-hydroxybutane-1,2,3-tricarboxylate = 2-methyl-cis-aconitate + H2O. It functions in the pathway carbohydrate metabolism; tricarboxylic acid cycle; isocitrate from oxaloacetate: step 2/2. It participates in organic acid metabolism; propanoate degradation. Involved in the catabolism of short chain fatty acids (SCFA) via the tricarboxylic acid (TCA)(acetyl degradation route) and probably via the 2-methylcitrate cycle I (propionate degradation route). Catalyzes the reversible isomerization of citrate to isocitrate via cis-aconitate. The apo form of AcnA functions as a RNA-binding regulatory protein which binds to selected IRE-like sequences present within the UTRs (untranslated regions) of 3' trxC and 5' IdeR mRNA. Could catalyze the hydration of 2-methyl-cis-aconitate to yield (2R,3S)-2-methylisocitrate. This Mycobacterium tuberculosis (strain ATCC 25618 / H37Rv) protein is Aconitate hydratase A (acn).